We begin with the raw amino-acid sequence, 127 residues long: Small ribosomal subunit protein uS11 (127 aa).

This sequence belongs to the universal ribosomal protein uS11 family. In terms of assembly, part of the 30S ribosomal subunit. Interacts with proteins S7 and S18. Binds to IF-3.

Functionally, located on the platform of the 30S subunit, it bridges several disparate RNA helices of the 16S rRNA. Forms part of the Shine-Dalgarno cleft in the 70S ribosome. The polypeptide is Small ribosomal subunit protein uS11 (Streptococcus gordonii (strain Challis / ATCC 35105 / BCRC 15272 / CH1 / DL1 / V288)).